The sequence spans 481 residues: Dynein axonemal assembly factor 8 (481 aa).

Disordered regions lie at residues 70–91 (DESGTWVTAGRSPSPEPLLVPG), 131–233 (LDTK…EGRP), 306–397 (TWKV…PVAS), and 415–454 (RAFRKGAVPPQLSAKDGPGGQKDQAQEDTGGSQTQRKKHI). Residues Ser83, Ser145, and Ser147 each carry the phosphoserine modification. Residues 144 to 155 (GSQSPPWSSQGE) are compositionally biased toward polar residues. A compositionally biased stretch (basic and acidic residues) spans 163 to 176 (GKLKTEPSDTDFKN). Basic residues predominate over residues 177–188 (SAKRRALRRERR). The span at 198–211 (KVTQAAQNPASGDQ) shows a compositional bias: polar residues. Positions 310–322 (SADKLQDTEEQVA) are enriched in basic and acidic residues. Residues 323 to 336 (RTRSASAESGFQTE) show a composition bias toward polar residues. Residue Ser328 is modified to Phosphoserine. Basic and acidic residues-rich tracts occupy residues 337 to 349 (RVQKRAESRRLKT) and 359 to 380 (RLTEPSDPQEHQSQESSEHSSS).

The protein resides in the dynein axonemal particle. Its subcellular location is the cytoplasm. Its function is as follows. In cyliated cells, dynein axonemal particle-specific protein required for deployment of ODA to the axoneme. Interacts with outer dynein arm (ODA) subunits. This chain is Dynein axonemal assembly factor 8 (Dnaaf8), found in Rattus norvegicus (Rat).